Here is a 536-residue protein sequence, read N- to C-terminus: Multicopper oxidase terE (536 aa).

The disordered stretch occupies residues M1–S21. Plastocyanin-like domains are found at residues M1–K67, E79–N238, and T354–M488. Residues H2, H4, H48, and H50 each coordinate Cu cation. Residue H397 coordinates Cu cation.

This sequence belongs to the multicopper oxidase family.

Its pathway is secondary metabolite biosynthesis. Multicopper oxidase; part of the gene cluster that mediates the biosynthesis of terrein, a fungal metabolite with ecological, antimicrobial, antiproliferative, and antioxidative activities. The first step in the pathway is performed by the polyketide synthase terA that produces 4-hydroxy-6-methylpyranon (4-HMP), orsellinic acid (OA), and 2,3-dehydro-6-hydroxymellein (2,3-dehydro-6-HM) by condensing acetyl-CoA with two, three, or four malonyl-CoA units, respectively. 4-HMP and OA are not pathway intermediates, but are rather shunt or side products. 2,3-dehydro-6-HM is further converted to 6-hydroxymellein (6-HM) by the 6-hydroxymellein synthase terB. The monooxygenases terC and terD, the multicopper oxidase terE and the Kelch-like protein terF are then involved in the transformation of 6-HM to terrein. Even if they are co-regulated with the other terrein cluster genes, terH and terI seem to be dispensable for terrein production; whereas one or both of the 2 transporters terG and terJ are probably required for efficient secretion of metabolites. In Aspergillus terreus (strain NIH 2624 / FGSC A1156), this protein is Multicopper oxidase terE.